Consider the following 285-residue polypeptide: Inhibitor of growth protein 5 (285 aa).

The interval 116–225 (EKASSTRAKS…ATHPSDVMDM (110 aa)) is disordered. Residues 131-149 (KKGRKKTKDSKTTGKKKKS) show a composition bias toward basic residues. Over residues 160 to 178 (NNQSNANSSVNSSSNAGQG) the composition is skewed to low complexity. The segment at 232-281 (PTYCLCHQVSYGEMIGCDNPDCPIEWFHFACVGLTTKPKGKWFCPKCTQD) adopts a PHD-type zinc-finger fold. The Zn(2+) site is built by cysteine 235, cysteine 237, cysteine 248, cysteine 253, histidine 259, cysteine 262, cysteine 275, and cysteine 278.

This sequence belongs to the ING family. Component of the Enok complex composed of at least Br140, enok, Eaf6 and Ing5.

Its subcellular location is the nucleus. The protein localises to the chromosome. In terms of biological role, component of the Enok complex which has a histone H3 acetyltransferase activity. In Drosophila melanogaster (Fruit fly), this protein is Inhibitor of growth protein 5.